The following is a 100-amino-acid chain: UPF0213 protein YhbQ (100 aa).

Residues 2 to 77 enclose the GIY-YIG domain; it reads TPWYLYLIRT…KQLTKRQKER (76 aa).

The protein belongs to the UPF0213 family.

This Escherichia coli O8 (strain IAI1) protein is UPF0213 protein YhbQ.